Consider the following 55-residue polypeptide: MAKPASIKIRLNSTADTGFFYVTKKNARTKTDKMVLKKYDPIVRKHVEFKEGKIK.

Belongs to the bacterial ribosomal protein bL33 family.

This is Large ribosomal subunit protein bL33 from Phenylobacterium zucineum (strain HLK1).